The chain runs to 198 residues: GTP cyclohydrolase-2 (198 aa).

52–56 (RMHSE) serves as a coordination point for GTP. 3 residues coordinate Zn(2+): Cys-57, Cys-68, and Cys-70. GTP contacts are provided by residues Gln-73, 94–96 (EGR), and Thr-116. The active-site Proton acceptor is Asp-128. Residue Arg-130 is the Nucleophile of the active site. Thr-151 and Lys-156 together coordinate GTP.

This sequence belongs to the GTP cyclohydrolase II family. Zn(2+) serves as cofactor.

The catalysed reaction is GTP + 4 H2O = 2,5-diamino-6-hydroxy-4-(5-phosphoribosylamino)-pyrimidine + formate + 2 phosphate + 3 H(+). The protein operates within cofactor biosynthesis; riboflavin biosynthesis; 5-amino-6-(D-ribitylamino)uracil from GTP: step 1/4. Its function is as follows. Catalyzes the conversion of GTP to 2,5-diamino-6-ribosylamino-4(3H)-pyrimidinone 5'-phosphate (DARP), formate and pyrophosphate. The protein is GTP cyclohydrolase-2 of Vibrio cholerae serotype O1 (strain ATCC 39315 / El Tor Inaba N16961).